A 272-amino-acid chain; its full sequence is 1,4-dihydroxy-2-naphthoyl-CoA synthase (272 aa).

Residues Arg-33, 72 to 76 (SGGDQ), Tyr-84, 116 to 120 (YAIGG), Thr-142, Ser-148, Tyr-245, and Lys-260 each bind substrate. Hydrogencarbonate is bound at residue 141–143 (QTG). The segment covering 253–264 (GRDAFKEKRDPD) has biased composition (basic and acidic residues). The disordered stretch occupies residues 253 to 272 (GRDAFKEKRDPDFDQFPKFP).

It belongs to the enoyl-CoA hydratase/isomerase family. MenB subfamily. It depends on hydrogencarbonate as a cofactor.

The catalysed reaction is 2-succinylbenzoyl-CoA + H(+) = 1,4-dihydroxy-2-naphthoyl-CoA + H2O. The protein operates within quinol/quinone metabolism; 1,4-dihydroxy-2-naphthoate biosynthesis; 1,4-dihydroxy-2-naphthoate from chorismate: step 6/7. It functions in the pathway quinol/quinone metabolism; menaquinone biosynthesis. Functionally, converts o-succinylbenzoyl-CoA (OSB-CoA) to 1,4-dihydroxy-2-naphthoyl-CoA (DHNA-CoA). This Staphylococcus saprophyticus subsp. saprophyticus (strain ATCC 15305 / DSM 20229 / NCIMB 8711 / NCTC 7292 / S-41) protein is 1,4-dihydroxy-2-naphthoyl-CoA synthase.